We begin with the raw amino-acid sequence, 401 residues long: Multidrug resistance protein MdtH (401 aa).

11 helical membrane passes run 13 to 33, 34 to 54, 78 to 95, 99 to 116, 139 to 159, 165 to 185, 214 to 234, 243 to 263, 289 to 309, 340 to 360, and 365 to 385; these read YFLL…FPLI, SIHF…ALGL, MIVT…FIAL, PWIL…GTLF, LLLM…SWLL, FVCW…ALFL, VLTL…FPII, AAVK…LYPI, FPVG…LFYL, LGLA…YDTG, and IPQL…YALH.

This sequence belongs to the major facilitator superfamily. DHA1 family. MdtH (TC 2.A.1.2.21) subfamily.

The protein resides in the cell inner membrane. This is Multidrug resistance protein MdtH from Photorhabdus laumondii subsp. laumondii (strain DSM 15139 / CIP 105565 / TT01) (Photorhabdus luminescens subsp. laumondii).